The chain runs to 427 residues: 3-phosphoshikimate 1-carboxyvinyltransferase (427 aa).

3-phosphoshikimate contacts are provided by Lys22, Ser23, and Arg27. A phosphoenolpyruvate-binding site is contributed by Lys22. Residues Gly96 and Arg124 each coordinate phosphoenolpyruvate. Residues Ser169, Ser170, Gln171, Ser197, Asp313, Asn336, and Lys340 each contribute to the 3-phosphoshikimate site. Gln171 contacts phosphoenolpyruvate. The active-site Proton acceptor is the Asp313. Positions 344, 386, and 411 each coordinate phosphoenolpyruvate.

It belongs to the EPSP synthase family. As to quaternary structure, monomer.

It is found in the cytoplasm. The catalysed reaction is 3-phosphoshikimate + phosphoenolpyruvate = 5-O-(1-carboxyvinyl)-3-phosphoshikimate + phosphate. It functions in the pathway metabolic intermediate biosynthesis; chorismate biosynthesis; chorismate from D-erythrose 4-phosphate and phosphoenolpyruvate: step 6/7. Catalyzes the transfer of the enolpyruvyl moiety of phosphoenolpyruvate (PEP) to the 5-hydroxyl of shikimate-3-phosphate (S3P) to produce enolpyruvyl shikimate-3-phosphate and inorganic phosphate. This is 3-phosphoshikimate 1-carboxyvinyltransferase from Escherichia coli O9:H4 (strain HS).